We begin with the raw amino-acid sequence, 254 residues long: Decaprenylphosphoryl-2-keto-beta-D-erythro-pentose reductase (254 aa).

D67 contributes to the NAD(+) binding site. The active-site Proton acceptor is the Y160. An NAD(+)-binding site is contributed by K164.

The protein belongs to the short-chain dehydrogenases/reductases (SDR) family. Interacts with DprE1 to form an epimerase complex.

Its subcellular location is the periplasm. The catalysed reaction is trans,octa-cis-decaprenylphospho-beta-D-arabinofuranose + NAD(+) = trans,octa-cis-decaprenylphospho-beta-D-erythro-pentofuranosid-2-ulose + NADH + H(+). The protein operates within cell wall biogenesis; cell wall polysaccharide biosynthesis. Its function is as follows. Component of the DprE1-DprE2 complex that catalyzes the 2-step epimerization of decaprenyl-phospho-ribose (DPR) to decaprenyl-phospho-arabinose (DPA), a key precursor that serves as the arabinose donor required for the synthesis of cell-wall arabinans. DprE1 catalyzes the first step of epimerization, namely FAD-dependent oxidation of the C2' hydroxyl of DPR to yield the keto intermediate decaprenyl-phospho-2'-keto-D-arabinose (DPX). The intermediate DPX is then transferred to DprE2 subunit of the epimerase complex, most probably through a 'substrate channel' at the interface of DprE1-DprE2 complex. DprE2 then catalyzes the second step of epimerization, the NAD(+)-dependent reduction of DPX that leads to the formation of DPA. This Mycolicibacterium smegmatis (strain ATCC 700084 / mc(2)155) (Mycobacterium smegmatis) protein is Decaprenylphosphoryl-2-keto-beta-D-erythro-pentose reductase.